Here is a 353-residue protein sequence, read N- to C-terminus: Serine/threonine-protein kinase SRK2G (353 aa).

In terms of domain architecture, Protein kinase spans 4-260 (YDVVKDLGAG…LKEIKNHPWY (257 aa)). ATP is bound by residues 10–18 (LGAGNFGVA) and Lys33. The Proton acceptor role is filled by Asp123. Residues 299–353 (RNPAPSTSAVKSSGSGADEEEEEDVEAEVEEEEDDEDEYEKHVKEAQSCQESDKA) form a disordered region. Polar residues predominate over residues 302-313 (APSTSAVKSSGS). The segment covering 315–336 (ADEEEEEDVEAEVEEEEDDEDE) has biased composition (acidic residues). Residues 337 to 353 (YEKHVKEAQSCQESDKA) show a composition bias toward basic and acidic residues.

The protein belongs to the protein kinase superfamily. Ser/Thr protein kinase family. As to expression, expressed in seedlings.

It is found in the nucleus. The catalysed reaction is L-seryl-[protein] + ATP = O-phospho-L-seryl-[protein] + ADP + H(+). It carries out the reaction L-threonyl-[protein] + ATP = O-phospho-L-threonyl-[protein] + ADP + H(+). In Arabidopsis thaliana (Mouse-ear cress), this protein is Serine/threonine-protein kinase SRK2G (SRK2G).